Reading from the N-terminus, the 744-residue chain is Prestin (744 aa).

The Cytoplasmic segment spans residues 1 to 75 (MDHAEENEIP…PITKWLPAYK (75 aa)). A helical transmembrane segment spans residues 76–105 (FKEYVLGDLVSGISTGVLQLPQGLAFAMLA). At 106 to 108 (AVP) the chain is on the extracellular side. A helical membrane pass occupies residues 109–126 (PVFGLYSSFYPVIMYCFF). At 127–137 (GTSRHISIGPF) the chain is on the cytoplasmic side. A helical membrane pass occupies residues 138-151 (AVISLMIGGVAVRL). The Extracellular segment spans residues 152 to 168 (VPDDIVIPGGVNATNGT). An Involved in motor function motif is present at residues 158–168 (IPGGVNATNGT). N-linked (GlcNAc...) asparagine glycosylation is found at N163 and N166. A helical membrane pass occupies residues 169 to 196 (EARDALRVKVAMSVTLLSGIIQFCLGVC). At 197-206 (RFGFVAIYLT) the chain is on the cytoplasmic side. A helical membrane pass occupies residues 207 to 230 (EPLVRGFTTAAAVHVFTSMLKYLF). Residues 231–241 (GVKTKRYSGIF) lie on the Extracellular side of the membrane. Positions 242 to 253 (SVVYSTVAVLQN) form an intramembrane region, helical. Over 254–258 (VKNLN) the chain is Extracellular. Residues 259–282 (VCSLGVGLMVFGLLLGGKEFNERF) traverse the membrane as a helical segment. Residues 283–291 (KEKLPAPIP) lie on the Cytoplasmic side of the membrane. A helical membrane pass occupies residues 292–307 (LEFFAVVMGTGISAGF). At 308 to 332 (NLHESYSVDVVGTLPLGLLPPANPD) the chain is on the extracellular side. A helical transmembrane segment spans residues 333–367 (TSLFHLVYVDAIAIAIVGFSVTISMAKTLANKHGY). At 368 to 370 (QVD) the chain is on the cytoplasmic side. Residues 371–388 (GNQELIALGICNSIGSLF) traverse the membrane as a helical segment. The Extracellular portion of the chain corresponds to 389–396 (QTFSISCS). Residues 397-406 (LSRSLVQEGT) traverse the membrane as a helical segment. Residue S398 coordinates salicylate. At 407-410 (GGKT) the chain is on the cytoplasmic side. A helical membrane pass occupies residues 411–432 (QLAGCLASLMILLVILATGFLF). Topologically, residues 433 to 436 (ESLP) are extracellular. The chain crosses the membrane as a helical span at residues 437–464 (QAVLSAIVIVNLKGMFMQFSDLPFFWRT). A topological domain (cytoplasmic) is located at residue S465. A helical transmembrane segment spans residues 466 to 481 (KIELTIWLTTFVSSLF). At 482–483 (LG) the chain is on the extracellular side. A helical transmembrane segment spans residues 484–504 (LDYGLITAVIIALLTVIYRTQ). Residues 505 to 718 (SPSYKVLGQL…AVLGSQVREA (214 aa)) are extended region for STAS domain. At 505–744 (SPSYKVLGQL…PNATPTTPEA (240 aa)) the chain is on the cytoplasmic side. Positions 525 to 713 (AYEEVKEIPG…HSIHDAVLGS (189 aa)) constitute an STAS domain. The disordered stretch occupies residues 720–744 (AEQEATASLPQEDMEPNATPTTPEA).

Belongs to the SLC26A/SulP transporter (TC 2.A.53) family. Homodimer. Interacts (via STAS domain) with CALM; this interaction is calcium-dependent and the STAS domain interacts with only one lobe of CALM which is an elongated conformation. Interacts with MYH1. As to expression, expressed in the outer hair cells (OHC) of the organ of Corti of the inner ear. Also weak expression in brain and testis. Very weakly expressed in heart, spleen, muscle and lactating mammary glands. Expressed in cardiac myocytes (at protein level), both in the surface sarcolemma and along the t-tubule. Weakly expressed in skeletal muscle cells (at protein level).

It localises to the lateral cell membrane. It catalyses the reaction 2 hydrogencarbonate(in) + chloride(out) = 2 hydrogencarbonate(out) + chloride(in). Functionally, voltage-sensitive motor protein that drives outer hair cell (OHC) electromotility (eM) and participates in sound amplification in the hearing organ. Converts changes in the transmembrane electric potential into mechanical displacements resulting in the coupling of its expansion to movement of a charged voltage sensor across the lipid membrane. The nature of the voltage sensor is not completely clear, and two models compete. In the first model, acts as an incomplete transporter where intracellular chloride anion acts as extrinsic voltage sensor that drives conformational change in the protein which is sufficient to produce a length change in the plane of the membrane and hence in the length of the OHC. The second model in which multiple charged amino acid residues are distributed at the intracellular and extracellular membrane interfaces that form an intrinsic voltage sensor, whose movement produces the non-linear capacitance (NLC). However, the effective voltage sensor may be the result of a hybrid voltage sensor, assembled from intrinsic charge (charged residues) and extrinsic charge (bound anion). Notably, binding of anions to the anion-binding pocket partially neutralizes the intrinsic positive charge rather than to form an electrically negative sensor, therefore remaining charge may serve as voltage sensor that, after depolarization, moves from down (expanded state) to up (contracted) conformation, which is accompanied by an eccentric contraction of the intermembrane cross-sectional area of the protein as well as a major increase in the hydrophobic thickness of the protein having as consequences the plasma membrane thickening and the cell contraction after membrane depolarization. The anion-binding pocket transits from the inward-open (Down) state, where it is exposed toward the intracellular solvent in the absence of anion, to the occluded (Up) state upon anion binding. Salicylate competes for the anion-binding site and inhibits the voltage-sensor movement, and therefore inhibits the charge transfer and electromotility by displacing Cl(-) from the anion-binding site and by preventing the structural transitions to the contracted state. In addition, can act as a weak Cl(-)/HCO3(-) antiporter across the cell membrane and so regulate the intracellular pH of the outer hair cells (OHCs), while firstly found as being unable to mediate electrogenic anion transport. Moreover, supports a role in cardiac mechanical amplification serving as an elastic element to enhance the actomyosin- based sarcomere contraction system. The polypeptide is Prestin (Mus musculus (Mouse)).